Here is a 197-residue protein sequence, read N- to C-terminus: 3-isopropylmalate dehydratase small subunit (197 aa).

This sequence belongs to the LeuD family. LeuD type 1 subfamily. As to quaternary structure, heterodimer of LeuC and LeuD.

The enzyme catalyses (2R,3S)-3-isopropylmalate = (2S)-2-isopropylmalate. The protein operates within amino-acid biosynthesis; L-leucine biosynthesis; L-leucine from 3-methyl-2-oxobutanoate: step 2/4. Catalyzes the isomerization between 2-isopropylmalate and 3-isopropylmalate, via the formation of 2-isopropylmaleate. This Streptomyces griseus subsp. griseus (strain JCM 4626 / CBS 651.72 / NBRC 13350 / KCC S-0626 / ISP 5235) protein is 3-isopropylmalate dehydratase small subunit.